Here is a 213-residue protein sequence, read N- to C-terminus: Orotate phosphoribosyltransferase (213 aa).

A 5-phospho-alpha-D-ribose 1-diphosphate-binding site is contributed by Lys26. 34 to 35 (FF) lines the orotate pocket. 5-phospho-alpha-D-ribose 1-diphosphate contacts are provided by residues 72-73 (YK), Arg99, Lys100, Lys103, His105, and 124-132 (DDVITAGTA). 2 residues coordinate orotate: Thr128 and Arg156.

It belongs to the purine/pyrimidine phosphoribosyltransferase family. PyrE subfamily. Homodimer. It depends on Mg(2+) as a cofactor.

It carries out the reaction orotidine 5'-phosphate + diphosphate = orotate + 5-phospho-alpha-D-ribose 1-diphosphate. It participates in pyrimidine metabolism; UMP biosynthesis via de novo pathway; UMP from orotate: step 1/2. Its function is as follows. Catalyzes the transfer of a ribosyl phosphate group from 5-phosphoribose 1-diphosphate to orotate, leading to the formation of orotidine monophosphate (OMP). In Shigella sonnei (strain Ss046), this protein is Orotate phosphoribosyltransferase.